The primary structure comprises 1133 residues: Lysylphosphatidylglycerol biosynthesis bifunctional protein LysX (1133 aa).

Residues 1–626 form a phosphatidylglycerol lysyltransferase region; it reads MTTVDASPGI…LLHHDGSTPD (626 aa). Transmembrane regions (helical) follow at residues 43–63, 82–102, 109–129, 140–160, 177–197, 233–253, and 575–595; these read VPAA…IASV, LFNF…LAAA, IAWL…AVDM, FGEN…VLSY, AVLV…VELF, LNAI…IVLF, and LIPR…LPFS. Residues 627–1133 form a lysine--tRNA ligase region; sequence VSGLQTADVD…TLPFPLAKPH (507 aa). Mg(2+) contacts are provided by D1045 and E1052.

In the N-terminal section; belongs to the LPG synthetase family. This sequence in the C-terminal section; belongs to the class-II aminoacyl-tRNA synthetase family. It depends on Mg(2+) as a cofactor.

Its subcellular location is the cell membrane. The enzyme catalyses tRNA(Lys) + L-lysine + ATP = L-lysyl-tRNA(Lys) + AMP + diphosphate. The catalysed reaction is L-lysyl-tRNA(Lys) + a 1,2-diacyl-sn-glycero-3-phospho-(1'-sn-glycerol) = a 1,2-diacyl-sn-glycero-3-phospho-1'-(3'-O-L-lysyl)-sn-glycerol + tRNA(Lys). In terms of biological role, catalyzes the production of L-lysyl-tRNA(Lys)transfer and the transfer of a lysyl group from L-lysyl-tRNA(Lys) to membrane-bound phosphatidylglycerol (PG), which produces lysylphosphatidylglycerol (LPG), one of the components of the bacterial membrane with a positive net charge. LPG synthesis contributes to the resistance to cationic antimicrobial peptides (CAMPs) and likely protects M.tuberculosis against the CAMPs produced by competiting microorganisms (bacteriocins). In fact, the modification of anionic phosphatidylglycerol with positively charged L-lysine results in repulsion of the peptides. This is Lysylphosphatidylglycerol biosynthesis bifunctional protein LysX (lysX) from Mycobacterium leprae (strain Br4923).